A 275-amino-acid polypeptide reads, in one-letter code: Ditrans,polycis-undecaprenyl-diphosphate synthase ((2E,6E)-farnesyl-diphosphate specific) (275 aa).

D45 is an active-site residue. D45 lines the Mg(2+) pocket. Residues 46-49, W50, R58, H62, and 90-92 contribute to the substrate site; these read GNGR and SSE. N93 (proton acceptor) is an active-site residue. Residues W94, R96, R213, and 219–221 contribute to the substrate site; that span reads RIS. Position 232 (E232) interacts with Mg(2+).

This sequence belongs to the UPP synthase family. In terms of assembly, homodimer. Requires Mg(2+) as cofactor.

It carries out the reaction 8 isopentenyl diphosphate + (2E,6E)-farnesyl diphosphate = di-trans,octa-cis-undecaprenyl diphosphate + 8 diphosphate. In terms of biological role, catalyzes the sequential condensation of isopentenyl diphosphate (IPP) with (2E,6E)-farnesyl diphosphate (E,E-FPP) to yield (2Z,6Z,10Z,14Z,18Z,22Z,26Z,30Z,34E,38E)-undecaprenyl diphosphate (di-trans,octa-cis-UPP). UPP is the precursor of glycosyl carrier lipid in the biosynthesis of bacterial cell wall polysaccharide components such as peptidoglycan and lipopolysaccharide. In Shewanella oneidensis (strain ATCC 700550 / JCM 31522 / CIP 106686 / LMG 19005 / NCIMB 14063 / MR-1), this protein is Ditrans,polycis-undecaprenyl-diphosphate synthase ((2E,6E)-farnesyl-diphosphate specific).